The sequence spans 208 residues: Putative thymidylate kinase (208 aa).

Residues 8–15 (GIDGSGVS) form a defective ATP-binding region.

The protein belongs to the thymidylate kinase family.

The catalysed reaction is dTMP + ATP = dTDP + ADP. This Aeropyrum pernix (strain ATCC 700893 / DSM 11879 / JCM 9820 / NBRC 100138 / K1) protein is Putative thymidylate kinase (tmk).